The primary structure comprises 343 residues: Vancomycin C-type resistance protein VanC1 (343 aa).

The region spanning 134–336 (HQLADTMGIA…YEILVEQLIA (203 aa)) is the ATP-grasp domain. 164 to 219 (IQDHGFPIFIKPNEAGSSKGITKVTDKTALQSALTTAFAYGSTVLIQKAIAGIEIG) is a binding site for ATP. Mg(2+)-binding residues include aspartate 290, glutamate 303, and asparagine 305. Mn(2+) is bound by residues aspartate 290, glutamate 303, and asparagine 305.

This sequence belongs to the D-alanine--D-alanine ligase family. It depends on Mg(2+) as a cofactor. The cofactor is Mn(2+).

The protein localises to the cell membrane. The catalysed reaction is D-serine + D-alanine + ATP = D-alanyl-D-serine + ADP + phosphate + H(+). In terms of biological role, D-alanine--D-alanine ligase of altered specificity, which catalyzes synthesis of D-Ala-D-Ser; produces a peptidoglycan which does not terminate in D-alanine but in D-serine, thus probably reducing affinity for vancomycin. Together with VanT and VanXYC, required for vancomycin resistance in E.gallinarum strain BM4174. The polypeptide is Vancomycin C-type resistance protein VanC1 (Enterococcus gallinarum).